The sequence spans 217 residues: Oxygen regulatory protein NreC (217 aa).

The 118-residue stretch at 2–119 (KIVIADDHAV…QLLLAIRTVY (118 aa)) folds into the Response regulatory domain. Position 53 is a 4-aspartylphosphate (Asp53). One can recognise an HTH luxR-type domain in the interval 148–213 (TSDPFKILSK…ELVEYALKKK (66 aa)). A DNA-binding region (H-T-H motif) is located at residues 172-191 (NKEIAEKLFVSVKTVEAHKT).

Phosphorylated by NreB.

It is found in the cytoplasm. Its function is as follows. Member of the two-component regulatory system NreB/NreC involved in the control of dissimilatory nitrate/nitrite reduction in response to oxygen. Phosphorylated NreC binds to a GC-rich palindromic sequence at the promoters of the nitrate (narGHJI) and nitrite (nir) reductase operons, as well as the putative nitrate transporter gene narT, and activates their expression. The polypeptide is Oxygen regulatory protein NreC (nreC) (Staphylococcus aureus (strain bovine RF122 / ET3-1)).